The sequence spans 577 residues: Autophagy-related protein 20 (577 aa).

Residues 57–81 are disordered; sequence GQSYVAPHSGGGRTSSGSSSSASLQ. The region spanning 95–239 is the PX domain; it reads GEQGRVRILE…DFLDPNNANW (145 aa). A 1,2-diacyl-sn-glycero-3-phospho-(1D-myo-inositol-3-phosphate)-binding residues include Arg-131, Ser-133, Lys-157, and Arg-205.

The protein belongs to the sorting nexin family.

It localises to the endosome membrane. The protein resides in the preautophagosomal structure membrane. Functionally, required for cytoplasm to vacuole transport (Cvt), pexophagy and mitophagy. Also involved in endoplasmic reticulum-specific autophagic process and is essential for the survival of cells subjected to severe ER stress. Functions in protein retrieval from the endocytic pathway. The chain is Autophagy-related protein 20 (ATG20) from Eremothecium gossypii (strain ATCC 10895 / CBS 109.51 / FGSC 9923 / NRRL Y-1056) (Yeast).